We begin with the raw amino-acid sequence, 630 residues long: Putative adenylate cyclase regulatory protein (630 aa).

The RING-type zinc finger occupies 10-46 (CAVCREPWAEGALELFPCRHVFCTVCVVERWRCPSCQ). LRR repeat units lie at residues 184 to 206 (FLVH…CRLK), 207 to 230 (TLEA…CALP), 231 to 251 (QLTS…RCIH), 255 to 277 (KLKV…GGMR), 278 to 301 (SLEK…CKFS), 302 to 324 (NLRE…KNLI), 325 to 347 (NLKV…ERLV), 348 to 370 (NLDK…ANLS), 371 to 393 (NLKE…QDLN), 394 to 416 (NLEV…KNLS), 417 to 439 (KMRE…ETLK), 440 to 462 (GLEE…WSLH), 463 to 485 (HLRV…EGIT), 486 to 508 (GLEE…WNLR), 509 to 531 (NVCV…QCLT), 532 to 554 (GLEE…GNLR), 555 to 577 (NLKC…DRLV), and 578 to 599 (NLEK…MELM).

May interact with adenylate cyclase to regulate its activity. Its function is as follows. May be involved in the postranscriptional regulation of genes in VSG expression sites. This Trypanosoma equiperdum protein is Putative adenylate cyclase regulatory protein (ESAG8C).